The sequence spans 365 residues: tRNA/tmRNA (uracil-C(5))-methyltransferase (365 aa).

Positions 189, 217, 222, 238, and 298 each coordinate S-adenosyl-L-methionine. The active-site Nucleophile is cysteine 323. The active-site Proton acceptor is the glutamate 357.

This sequence belongs to the class I-like SAM-binding methyltransferase superfamily. RNA M5U methyltransferase family. TrmA subfamily.

It carries out the reaction uridine(54) in tRNA + S-adenosyl-L-methionine = 5-methyluridine(54) in tRNA + S-adenosyl-L-homocysteine + H(+). The enzyme catalyses uridine(341) in tmRNA + S-adenosyl-L-methionine = 5-methyluridine(341) in tmRNA + S-adenosyl-L-homocysteine + H(+). Dual-specificity methyltransferase that catalyzes the formation of 5-methyluridine at position 54 (m5U54) in all tRNAs, and that of position 341 (m5U341) in tmRNA (transfer-mRNA). This chain is tRNA/tmRNA (uracil-C(5))-methyltransferase, found in Shewanella loihica (strain ATCC BAA-1088 / PV-4).